The following is a 287-amino-acid chain: Coatomer subunit epsilon-1 (287 aa).

It belongs to the COPE family. Oligomeric complex that consists of at least the alpha, beta, beta', gamma, delta, epsilon and zeta subunits.

The protein localises to the cytoplasm. The protein resides in the golgi apparatus membrane. It localises to the cytoplasmic vesicle. Its subcellular location is the COPI-coated vesicle membrane. The coatomer is a cytosolic protein complex that binds to dilysine motifs and reversibly associates with Golgi non-clathrin-coated vesicles, which further mediate biosynthetic protein transport from the ER, via the Golgi up to the trans Golgi network. The coatomer complex is required for budding from Golgi membranes, and is essential for the retrograde Golgi-to-ER transport of dilysine-tagged proteins. This Oryza sativa subsp. japonica (Rice) protein is Coatomer subunit epsilon-1 (COPE1).